A 349-amino-acid chain; its full sequence is CCN family member 2 (349 aa).

Residues 1–26 form the signal peptide; sequence MSATGLGPVRCAFVLLLALCSRPASS. An IGFBP N-terminal domain is found at 27–98; sequence QDCSAPCQCP…NRKIGVCTAK (72 aa). 6 disulfide bridges follow: C29-C54, C33-C56, C35-C57, C43-C60, C68-C82, and C74-C95. Positions 101 to 167 constitute a VWFC domain; that stretch reads APCVFGGTVY…GKCCEEWVCD (67 aa). One can recognise a TSP type-1 domain in the interval 198-243; sequence NCLVQTTEWSACSKTCGMGISTRVTNDNAFCRLEKQSRLCMVRPCE. The heparin-binding stretch occupies residues 247-349; it reads EENIKKGKKC…YYRKMYGDMA (103 aa). Intrachain disulfides connect C256–C293, C273–C307, C284–C323, C287–C325, and C292–C329. In terms of domain architecture, CTCK spans 256–330; sequence CIRTPKISKP…KTCACHYNCP (75 aa).

It belongs to the CCN family. Monomer. Interacts with TSKU.

Its subcellular location is the secreted. It localises to the extracellular space. It is found in the extracellular matrix. Major connective tissue mitoattractant secreted by vascular endothelial cells. Promotes proliferation and differentiation of chondrocytes. Is involved in the stimulation of osteoblast differentiation and has a critical role in osteogenesis. Mediates heparin- and divalent cation-dependent cell adhesion in many cell types including fibroblasts, myofibroblasts, endothelial and epithelial cells. Enhances fibroblast growth factor-induced DNA synthesis. This is CCN family member 2 (CCN2) from Bos taurus (Bovine).